A 227-amino-acid chain; its full sequence is Nucleoside triphosphate pyrophosphatase (227 aa).

The Proton acceptor role is filled by Asp-77.

It belongs to the Maf family. It depends on a divalent metal cation as a cofactor.

It is found in the cytoplasm. The enzyme catalyses a ribonucleoside 5'-triphosphate + H2O = a ribonucleoside 5'-phosphate + diphosphate + H(+). The catalysed reaction is a 2'-deoxyribonucleoside 5'-triphosphate + H2O = a 2'-deoxyribonucleoside 5'-phosphate + diphosphate + H(+). Its function is as follows. Nucleoside triphosphate pyrophosphatase. May have a dual role in cell division arrest and in preventing the incorporation of modified nucleotides into cellular nucleic acids. The protein is Nucleoside triphosphate pyrophosphatase of Rickettsia typhi (strain ATCC VR-144 / Wilmington).